The primary structure comprises 397 residues: Succinate--CoA ligase [ADP-forming] subunit beta (397 aa).

The ATP-grasp domain maps to 9–254; it reads KALLKGYGAP…ETEEDAKEIE (246 aa). ATP-binding positions include K46, 53 to 55, E109, A112, and E117; that span reads GRG. Mg(2+) contacts are provided by N209 and D223. Substrate contacts are provided by residues N274 and 331 to 333; that span reads GIM.

Belongs to the succinate/malate CoA ligase beta subunit family. In terms of assembly, heterotetramer of two alpha and two beta subunits. It depends on Mg(2+) as a cofactor.

The catalysed reaction is succinate + ATP + CoA = succinyl-CoA + ADP + phosphate. It catalyses the reaction GTP + succinate + CoA = succinyl-CoA + GDP + phosphate. Its pathway is carbohydrate metabolism; tricarboxylic acid cycle; succinate from succinyl-CoA (ligase route): step 1/1. Its function is as follows. Succinyl-CoA synthetase functions in the citric acid cycle (TCA), coupling the hydrolysis of succinyl-CoA to the synthesis of either ATP or GTP and thus represents the only step of substrate-level phosphorylation in the TCA. The beta subunit provides nucleotide specificity of the enzyme and binds the substrate succinate, while the binding sites for coenzyme A and phosphate are found in the alpha subunit. The sequence is that of Succinate--CoA ligase [ADP-forming] subunit beta from Rhizobium etli (strain CIAT 652).